Here is a 735-residue protein sequence, read N- to C-terminus: Phosphoribosylformylglycinamidine synthase subunit PurL (735 aa).

His-48 is an active-site residue. Residues Tyr-51 and Lys-90 each coordinate ATP. A Mg(2+)-binding site is contributed by Glu-92. Residues 93–96 (SHNH) and Arg-115 each bind substrate. Residue His-94 is the Proton acceptor of the active site. A Mg(2+)-binding site is contributed by Asp-116. Gln-239 contributes to the substrate binding site. Asp-267 is a binding site for Mg(2+). Residue 311–313 (ESQ) coordinates substrate. The ATP site is built by Asp-492 and Gly-529. Residue Asn-530 coordinates Mg(2+). Ser-532 is a substrate binding site.

The protein belongs to the FGAMS family. In terms of assembly, monomer. Part of the FGAM synthase complex composed of 1 PurL, 1 PurQ and 2 PurS subunits.

Its subcellular location is the cytoplasm. It carries out the reaction N(2)-formyl-N(1)-(5-phospho-beta-D-ribosyl)glycinamide + L-glutamine + ATP + H2O = 2-formamido-N(1)-(5-O-phospho-beta-D-ribosyl)acetamidine + L-glutamate + ADP + phosphate + H(+). The protein operates within purine metabolism; IMP biosynthesis via de novo pathway; 5-amino-1-(5-phospho-D-ribosyl)imidazole from N(2)-formyl-N(1)-(5-phospho-D-ribosyl)glycinamide: step 1/2. Functionally, part of the phosphoribosylformylglycinamidine synthase complex involved in the purines biosynthetic pathway. Catalyzes the ATP-dependent conversion of formylglycinamide ribonucleotide (FGAR) and glutamine to yield formylglycinamidine ribonucleotide (FGAM) and glutamate. The FGAM synthase complex is composed of three subunits. PurQ produces an ammonia molecule by converting glutamine to glutamate. PurL transfers the ammonia molecule to FGAR to form FGAM in an ATP-dependent manner. PurS interacts with PurQ and PurL and is thought to assist in the transfer of the ammonia molecule from PurQ to PurL. The chain is Phosphoribosylformylglycinamidine synthase subunit PurL from Bradyrhizobium sp. (strain BTAi1 / ATCC BAA-1182).